Reading from the N-terminus, the 453-residue chain is Ribulose bisphosphate carboxylase large chain (453 aa).

The propeptide occupies 1 to 2; that stretch reads MS. The residue at position 3 (Pro-3) is an N-acetylproline. Lys-14 is modified (N6,N6,N6-trimethyllysine). The substrate site is built by Asn-123 and Thr-173. The active-site Proton acceptor is Lys-175. Lys-177 contributes to the substrate binding site. Mg(2+)-binding residues include Lys-201, Asp-203, and Glu-204. Lys-201 is subject to N6-carboxylysine. His-294 (proton acceptor) is an active-site residue. Substrate contacts are provided by Arg-295, His-327, and Ser-379.

The protein belongs to the RuBisCO large chain family. Type I subfamily. As to quaternary structure, heterohexadecamer of 8 large chains and 8 small chains; disulfide-linked. The disulfide link is formed within the large subunit homodimers. The cofactor is Mg(2+). In terms of processing, the disulfide bond which can form in the large chain dimeric partners within the hexadecamer appears to be associated with oxidative stress and protein turnover.

The protein localises to the plastid. Its subcellular location is the chloroplast. The enzyme catalyses 2 (2R)-3-phosphoglycerate + 2 H(+) = D-ribulose 1,5-bisphosphate + CO2 + H2O. It carries out the reaction D-ribulose 1,5-bisphosphate + O2 = 2-phosphoglycolate + (2R)-3-phosphoglycerate + 2 H(+). In terms of biological role, ruBisCO catalyzes two reactions: the carboxylation of D-ribulose 1,5-bisphosphate, the primary event in carbon dioxide fixation, as well as the oxidative fragmentation of the pentose substrate in the photorespiration process. Both reactions occur simultaneously and in competition at the same active site. The polypeptide is Ribulose bisphosphate carboxylase large chain (Rubia tinctorum (Madder)).